Consider the following 1804-residue polypeptide: Obscurin-like protein 1 (1804 aa).

A Phosphoserine modification is found at Ser-10. Ig-like domains lie at Pro-12–Thr-100, Pro-128–Gln-225, Pro-241–Ser-330, and Pro-339–Thr-425. Positions Phe-17–Arg-19 are interaction with TTN. A disulfide bridge connects residues Cys-33 and Cys-84. The segment at Arg-85 to Tyr-94 is interaction with TTN. Cys-149 and Cys-209 form a disulfide bridge. The disordered stretch occupies residues His-227–Lys-249. Intrachain disulfides connect Cys-267–Cys-319 and Cys-362–Cys-412. Residues Pro-517–Thr-615 form the Fibronectin type-III domain. Ig-like domains are found at residues Pro-720–Thr-800, Pro-804–Thr-891, Pro-902–Thr-982, Pro-986–Thr-1075, Pro-1078–Ser-1165, Pro-1176–Gln-1261, Pro-1266–Ser-1442, Pro-1536–Thr-1621, Arg-1625–Gly-1694, and Pro-1702–Gln-1798. 8 cysteine pairs are disulfide-bonded: Cys-738–Cys-788, Cys-829–Cys-879, Cys-920–Cys-970, Cys-1011–Cys-1061, Cys-1103–Cys-1153, Cys-1195–Cys-1245, Cys-1289–Cys-1430, and Cys-1558–Cys-1608.

As to quaternary structure, component of the 3M complex, composed of core components CUL7, CCDC8 and OBSL1. Interacts with CCDC8. Interacts with CUL7; the interaction is direct. Interacts with FBXW8. Interacts (via N-terminal Ig-like domain) with TTN/titin (via C-terminal Ig-like domain); the interaction is direct.

The protein localises to the cytoplasm. The protein resides in the perinuclear region. Its subcellular location is the golgi apparatus. Core component of the 3M complex, a complex required to regulate microtubule dynamics and genome integrity. It is unclear how the 3M complex regulates microtubules, it could act by controlling the level of a microtubule stabilizer. Acts as a regulator of the Cul7-RING(FBXW8) ubiquitin-protein ligase, playing a critical role in the ubiquitin ligase pathway that regulates Golgi morphogenesis and dendrite patterning in brain. Required to localize CUL7 to the Golgi apparatus in neurons. The chain is Obscurin-like protein 1 (Obsl1) from Mus musculus (Mouse).